Consider the following 247-residue polypeptide: Chymase (247 aa).

The first 19 residues, 1-19, serve as a signal peptide directing secretion; sequence MHLLTLHLLLLLLGSSTKA. A propeptide spans 20–21 (activation peptide); that stretch reads GE. The Peptidase S1 domain occupies 22–245; sequence IIGGTECIPH…YRPWINKILR (224 aa). Cys51 and Cys67 are joined by a disulfide. His66 acts as the Charge relay system in catalysis. N-linked (GlcNAc...) asparagine glycosylation occurs at Asn80. Asp110 functions as the Charge relay system in the catalytic mechanism. Cystine bridges form between Cys144-Cys209 and Cys175-Cys188. Catalysis depends on Ser203, which acts as the Charge relay system.

It belongs to the peptidase S1 family. Granzyme subfamily. In terms of tissue distribution, mast cells.

It is found in the secreted. The protein resides in the cytoplasmic granule. It carries out the reaction Preferential cleavage: Phe-|-Xaa &gt; Tyr-|-Xaa &gt; Trp-|-Xaa &gt; Leu-|-Xaa.. Major secreted protease of mast cells with suspected roles in vasoactive peptide generation, extracellular matrix degradation, and regulation of gland secretion. In Mus musculus (Mouse), this protein is Chymase (Cma1).